We begin with the raw amino-acid sequence, 317 residues long: Metaxin-1 (317 aa).

Glycyl lysine isopeptide (Lys-Gly) (interchain with G-Cter in ubiquitin) cross-links involve residues Lys38, Lys41, and Lys78. The helical transmembrane segment at 164–184 threads the bilayer; that stretch reads EELEKELYREARECLTLLSQR.

Belongs to the metaxin family. As to quaternary structure, interacts with MTX2/metaxin-2. Associates with the mitochondrial contact site and cristae organizing system (MICOS) complex, composed of at least MICOS10/MIC10, CHCHD3/MIC19, CHCHD6/MIC25, APOOL/MIC27, IMMT/MIC60, APOO/MIC23/MIC26 and QIL1/MIC13. This complex was also known under the names MINOS or MitOS complex. The MICOS complex associates with mitochondrial outer membrane proteins SAMM50, MTX1 and MTX2 (together described as components of the mitochondrial outer membrane sorting assembly machinery (SAM) complex) and DNAJC11, mitochondrial inner membrane protein TMEM11 and with HSPA9. The MICOS and SAM complexes together with DNAJC11 are part of a large protein complex spanning both membranes termed the mitochondrial intermembrane space bridging (MIB) complex. Interacts with ARMC1. Ubiquitinated by PRKN during mitophagy, leading to its degradation and enhancement of mitophagy. Deubiquitinated by USP30.

It is found in the mitochondrion outer membrane. Involved in transport of proteins into the mitochondrion. Essential for embryonic development. This Macaca fascicularis (Crab-eating macaque) protein is Metaxin-1 (MTX1).